The primary structure comprises 97 residues: Protein Vpr (97 aa).

Residues 1 to 42 (MEQAPEDQGPQREPHNEWTLELLEELKREAVRHFPRPWLHGL) are homooligomerization. Ser79, Ser95, and Ser97 each carry phosphoserine; by host.

Belongs to the HIV-1 VPR protein family. In terms of assembly, homooligomer, may form homodimer. Interacts with p6-gag region of the Pr55 Gag precursor protein through a (Leu-X-X)4 motif near the C-terminus of the P6gag protein. Interacts with host UNG. May interact with host RAD23A/HHR23A. Interacts with host VPRBP/DCAF1, leading to hijack the CUL4A-RBX1-DDB1-DCAF1/VPRBP complex, mediating ubiquitination of host proteins such as TERT and ZGPAT and arrest of the cell cycle in G2 phase. Post-translationally, phosphorylated on several residues by host. These phosphorylations regulate VPR activity for the nuclear import of the HIV-1 pre-integration complex.

It is found in the virion. It localises to the host nucleus. Its subcellular location is the host extracellular space. Its function is as follows. During virus replication, may deplete host UNG protein, and incude G2-M cell cycle arrest. Acts by targeting specific host proteins for degradation by the 26S proteasome, through association with the cellular CUL4A-DDB1 E3 ligase complex by direct interaction with host VPRPB/DCAF-1. Cell cycle arrest reportedly occurs within hours of infection and is not blocked by antiviral agents, suggesting that it is initiated by the VPR carried into the virion. Additionally, VPR induces apoptosis in a cell cycle dependent manner suggesting that these two effects are mechanistically linked. Detected in the serum and cerebrospinal fluid of AIDS patient, VPR may also induce cell death to bystander cells. During virus entry, plays a role in the transport of the viral pre-integration (PIC) complex to the host nucleus. This function is crucial for viral infection of non-dividing macrophages. May act directly at the nuclear pore complex, by binding nucleoporins phenylalanine-glycine (FG)-repeat regions. The polypeptide is Protein Vpr (Human immunodeficiency virus type 1 group M subtype B (isolate YU-2) (HIV-1)).